We begin with the raw amino-acid sequence, 134 residues long: C-C motif chemokine 21 (134 aa).

An N-terminal signal peptide occupies residues 1–23 (MAQSLALSLLILVLAFGIPRTQG). Cystine bridges form between Cys-31-Cys-57, Cys-32-Cys-75, and Cys-103-Cys-122. Residues 88–134 (QHLDKTPSPQKPAQGCRKDRGASKTGKKGKGSKGCKRTERSQTPKGP) are disordered. The interval 98 to 134 (KPAQGCRKDRGASKTGKKGKGSKGCKRTERSQTPKGP) is C-terminal basic extension. Residues 112-122 (TGKKGKGSKGC) show a composition bias toward basic residues. Basic and acidic residues predominate over residues 123–134 (KRTERSQTPKGP).

The protein belongs to the intercrine beta (chemokine CC) family. In terms of assembly, monomer. Binds to CCR7. Interacts with PDPN; relocalizes PDPN to the basolateral membrane. Interacts with TNFAIP6 (via Link domain). Interacts with GPR174. Highly expressed in high endothelial venules of lymph nodes, spleen and appendix. Intermediate levels found in small intestine, thyroid gland and trachea. Low level expression in thymus, bone marrow, liver, and pancreas. Also found in tonsil, fetal heart and fetal spleen.

It is found in the secreted. In terms of biological role, inhibits hemopoiesis and stimulates chemotaxis. Chemotactic in vitro for thymocytes and activated T-cells, but not for B-cells, macrophages, or neutrophils. Shows preferential activity towards naive T-cells. May play a role in mediating homing of lymphocytes to secondary lymphoid organs. Binds to atypical chemokine receptor ACKR4 and mediates the recruitment of beta-arrestin (ARRB1/2) to ACKR4. The chain is C-C motif chemokine 21 (CCL21) from Homo sapiens (Human).